The chain runs to 499 residues: Alpha-amylase A type-3 (499 aa).

Positions 1 to 21 (MMVAWWSLFLYGLQVAAPALA) are cleaved as a signal peptide. A disulfide bridge links cysteine 51 with cysteine 59. Tryptophan 104 contacts substrate. Asparagine 142 provides a ligand contact to Ca(2+). Substrate is bound at residue histidine 143. Cysteine 171 and cysteine 185 are oxidised to a cystine. Ca(2+) contacts are provided by glutamate 183 and aspartate 196. N-linked (GlcNAc...) asparagine glycosylation is present at asparagine 218. Arginine 225 provides a ligand contact to substrate. Positions 227, 231, and 251 each coordinate Ca(2+). The active-site Nucleophile is aspartate 227. Residue 230–231 (KH) coordinates substrate. The active-site Proton donor is glutamate 251. A substrate-binding site is contributed by glycine 255. An intrachain disulfide couples cysteine 261 to cysteine 304. Substrate is bound at residue arginine 365. A disulfide bond links cysteine 461 and cysteine 496.

Belongs to the glycosyl hydrolase 13 family. As to quaternary structure, monomer. Ca(2+) serves as cofactor.

The protein localises to the secreted. It carries out the reaction Endohydrolysis of (1-&gt;4)-alpha-D-glucosidic linkages in polysaccharides containing three or more (1-&gt;4)-alpha-linked D-glucose units.. This Aspergillus oryzae (strain ATCC 42149 / RIB 40) (Yellow koji mold) protein is Alpha-amylase A type-3 (amy3).